Here is a 643-residue protein sequence, read N- to C-terminus: Threonine--tRNA ligase (643 aa).

A TGS domain is found at 3 to 64; that stretch reads DVVKITFPDG…EEDGAISIIT (62 aa). The interval 245 to 542 is catalytic; the sequence is DHRKLGKELD…LIEEYKGAFP (298 aa). Zn(2+) is bound by residues Cys-338, His-389, and His-519.

The protein belongs to the class-II aminoacyl-tRNA synthetase family. In terms of assembly, homodimer. The cofactor is Zn(2+).

It is found in the cytoplasm. The enzyme catalyses tRNA(Thr) + L-threonine + ATP = L-threonyl-tRNA(Thr) + AMP + diphosphate + H(+). Functionally, catalyzes the attachment of threonine to tRNA(Thr) in a two-step reaction: L-threonine is first activated by ATP to form Thr-AMP and then transferred to the acceptor end of tRNA(Thr). Also edits incorrectly charged L-seryl-tRNA(Thr). The chain is Threonine--tRNA ligase from Anoxybacillus flavithermus (strain DSM 21510 / WK1).